Consider the following 256-residue polypeptide: Surfeit locus protein 2 (256 aa).

The disordered stretch occupies residues 133–256 (RRREDQMDGD…KSFSSCKQPG (124 aa)). Basic and acidic residues predominate over residues 135–150 (REDQMDGDGPRPREAF). Residues 156–165 (SDEGGAASDD) are compositionally biased toward low complexity. Acidic residues predominate over residues 183–193 (STEDGDGTDDF). Phosphothreonine is present on residues Thr190 and Thr195. The segment covering 194-218 (LTDKEDEKAKPPREKATDEGRRETT) has biased composition (basic and acidic residues). Residues 224 to 247 (VQKRGKKQLGSLKKKFKSHHRKPK) show a composition bias toward basic residues.

Belongs to the SURF2 family.

This chain is Surfeit locus protein 2 (SURF2), found in Homo sapiens (Human).